Consider the following 409-residue polypeptide: Elongation factor Tu, chloroplastic (409 aa).

The 205-residue stretch at 10-214 folds into the tr-type G domain; the sequence is KPHINIGTIG…QVDSYIPTPT (205 aa). Residues 19-26 form a G1 region; that stretch reads GHVDHGKT. 19 to 26 lines the GTP pocket; the sequence is GHVDHGKT. Residue threonine 26 coordinates Mg(2+). Residue lysine 57 is modified to N6-methyllysine. Residues 60-64 are G2; that stretch reads GITIN. Positions 81–84 are G3; that stretch reads DCPG. Residues 81–85 and 136–139 contribute to the GTP site; these read DCPGH and NKED. The G4 stretch occupies residues 136 to 139; it reads NKED. Positions 174 to 176 are G5; it reads SAL.

This sequence belongs to the TRAFAC class translation factor GTPase superfamily. Classic translation factor GTPase family. EF-Tu/EF-1A subfamily.

The protein localises to the plastid. Its subcellular location is the chloroplast. It catalyses the reaction GTP + H2O = GDP + phosphate + H(+). Its function is as follows. GTP hydrolase that promotes the GTP-dependent binding of aminoacyl-tRNA to the A-site of ribosomes during protein biosynthesis. The polypeptide is Elongation factor Tu, chloroplastic (tufA) (Euglena gracilis).